Here is a 597-residue protein sequence, read N- to C-terminus: Large ribosomal subunit assembly factor BipA (597 aa).

In terms of domain architecture, tr-type G spans 3 to 198; sequence LPIRNVAIIA…AILHHVPPPA (196 aa). GTP-binding positions include 15-20 and 128-131; these read DHGKTT and NKID.

It belongs to the TRAFAC class translation factor GTPase superfamily. Classic translation factor GTPase family. BipA subfamily. In terms of assembly, monomer.

The protein resides in the cytoplasm. The catalysed reaction is GTP + H2O = GDP + phosphate + H(+). Its function is as follows. A 50S ribosomal subunit assembly protein with GTPase activity, required for 50S subunit assembly at low temperatures, may also play a role in translation. Binds GTP and analogs. Binds the 70S ribosome between the 30S and 50S subunits, in a similar position as ribosome-bound EF-G; it contacts a number of ribosomal proteins, both rRNAs and the A-site tRNA. The sequence is that of Large ribosomal subunit assembly factor BipA from Synechocystis sp. (strain ATCC 27184 / PCC 6803 / Kazusa).